We begin with the raw amino-acid sequence, 650 residues long: Fructose-1,6-bisphosphatase class 3 (650 aa).

The protein belongs to the FBPase class 3 family. Mn(2+) is required as a cofactor.

The enzyme catalyses beta-D-fructose 1,6-bisphosphate + H2O = beta-D-fructose 6-phosphate + phosphate. It participates in carbohydrate biosynthesis; gluconeogenesis. The chain is Fructose-1,6-bisphosphatase class 3 from Staphylococcus xylosus.